The sequence spans 282 residues: Acetylglutamate kinase (282 aa).

Substrate-binding positions include 62–63, Arg84, and Asn178; that span reads GG.

The protein belongs to the acetylglutamate kinase family. ArgB subfamily.

It localises to the cytoplasm. The catalysed reaction is N-acetyl-L-glutamate + ATP = N-acetyl-L-glutamyl 5-phosphate + ADP. The protein operates within amino-acid biosynthesis; L-arginine biosynthesis; N(2)-acetyl-L-ornithine from L-glutamate: step 2/4. In terms of biological role, catalyzes the ATP-dependent phosphorylation of N-acetyl-L-glutamate. The chain is Acetylglutamate kinase from Kosmotoga olearia (strain ATCC BAA-1733 / DSM 21960 / TBF 19.5.1).